The sequence spans 213 residues: Orotidine 5'-phosphate decarboxylase (213 aa).

Residues aspartate 9, lysine 31, 59-68, serine 115, 166-176, glycine 191, and arginine 192 each bind substrate; these read DFKVADIPAT and PGVGAQGGKIE. The active-site Proton donor is lysine 61.

The protein belongs to the OMP decarboxylase family. Type 1 subfamily. Homodimer.

The enzyme catalyses orotidine 5'-phosphate + H(+) = UMP + CO2. The protein operates within pyrimidine metabolism; UMP biosynthesis via de novo pathway; UMP from orotate: step 2/2. Functionally, catalyzes the decarboxylation of orotidine 5'-monophosphate (OMP) to uridine 5'-monophosphate (UMP). The chain is Orotidine 5'-phosphate decarboxylase from Methanocaldococcus jannaschii (strain ATCC 43067 / DSM 2661 / JAL-1 / JCM 10045 / NBRC 100440) (Methanococcus jannaschii).